The sequence spans 1091 residues: ATP-dependent RNA helicase ddx54 (1091 aa).

2 disordered regions span residues 1 to 63 (MVKP…KEEF) and 150 to 231 (DNSN…KTGG). Basic and acidic residues predominate over residues 26-35 (MKGKKLETKS). Polar residues predominate over residues 150–161 (DNSNFDNNGDQF). Residues 196–207 (KKEEIESSEKFE) are compositionally biased toward basic and acidic residues. Positions 230–258 (GGFQSMDLTKNLLKAILKKGFNVPTPIQR) match the Q motif motif. The Helicase ATP-binding domain occupies 261-433 (IPMILDGHDI…RAGLNNPKLI (173 aa)). 274–281 (ARTGSGKT) is a binding site for ATP. A DEAD box motif is present at residues 381-384 (DEAD). Residues 478-632 (TETTTTTTTN…KFQYEGQTIN (155 aa)) enclose the Helicase C-terminal domain. 2 disordered regions span residues 801–896 (EEML…TPEN) and 933–1091 (KRKG…KSRK). The segment covering 814–823 (DNNKDIKMNE) has biased composition (basic and acidic residues). A compositionally biased stretch (acidic residues) spans 824 to 855 (NDDENDDDDEEGENDDDEEEENEKDEDDEEDE). 3 stretches are compositionally biased toward basic and acidic residues: residues 865-874 (ESSDKNDNNK), 944-975 (DADRKNSKKLVRNEAGKLVEAKKSHKGYEEWK), and 1008-1019 (QGREKEKKDNKA). A compositionally biased stretch (basic residues) spans 1020-1029 (SHAKGSHGLK). Residues 1031–1052 (RPSELKDKNQISKNRSEKERKM) are compositionally biased toward basic and acidic residues. The segment covering 1068–1079 (SGGGGGGKGSKF) has biased composition (gly residues).

This sequence belongs to the DEAD box helicase family. DDX54/DBP10 subfamily.

It is found in the nucleus. The protein resides in the nucleolus. It carries out the reaction ATP + H2O = ADP + phosphate + H(+). In terms of biological role, ATP-binding RNA helicase which may be involved in the ribosome biogenesis. This Dictyostelium discoideum (Social amoeba) protein is ATP-dependent RNA helicase ddx54 (helA).